The primary structure comprises 321 residues: Urease accessory protein UreD (321 aa).

This sequence belongs to the UreD family. UreD, UreF and UreG form a complex that acts as a GTP-hydrolysis-dependent molecular chaperone, activating the urease apoprotein by helping to assemble the nickel containing metallocenter of UreC. The UreE protein probably delivers the nickel.

It localises to the cytoplasm. In terms of biological role, required for maturation of urease via the functional incorporation of the urease nickel metallocenter. This chain is Urease accessory protein UreD, found in Yersinia pseudotuberculosis serotype O:1b (strain IP 31758).